Here is a 157-residue protein sequence, read N- to C-terminus: NudC domain-containing protein 2 (157 aa).

Serine 2 is modified (N-acetylserine). A CS domain is found at cysteine 14–leucine 104. Residues phenylalanine 134 to lysine 157 form a disordered region. Serine 142 carries the phosphoserine modification. Tyrosine 145 carries the post-translational modification Phosphotyrosine.

Interacts with LIS1.

Its subcellular location is the chromosome. The protein resides in the centromere. It is found in the kinetochore. It localises to the cytoplasm. The protein localises to the cytoskeleton. Its subcellular location is the microtubule organizing center. The protein resides in the centrosome. It is found in the spindle pole. May regulate the LIS1/dynein pathway by stabilizing LIS1 with Hsp90 chaperone. The chain is NudC domain-containing protein 2 (NUDCD2) from Homo sapiens (Human).